A 1316-amino-acid polypeptide reads, in one-letter code: DNA-directed RNA polymerase subunit beta' (1316 aa).

Zn(2+)-binding residues include Cys60, Cys62, Cys75, and Cys78. Residues Asp535, Asp537, and Asp539 each coordinate Mg(2+). Cys891, Cys968, Cys975, and Cys978 together coordinate Zn(2+).

The protein belongs to the RNA polymerase beta' chain family. In terms of assembly, the RNAP catalytic core consists of 2 alpha, 1 beta, 1 beta' and 1 omega subunit. When a sigma factor is associated with the core the holoenzyme is formed, which can initiate transcription. Requires Mg(2+) as cofactor. Zn(2+) serves as cofactor.

It catalyses the reaction RNA(n) + a ribonucleoside 5'-triphosphate = RNA(n+1) + diphosphate. Its function is as follows. DNA-dependent RNA polymerase catalyzes the transcription of DNA into RNA using the four ribonucleoside triphosphates as substrates. The sequence is that of DNA-directed RNA polymerase subunit beta' from Mycobacterium tuberculosis (strain CDC 1551 / Oshkosh).